The sequence spans 225 residues: Chalcone--flavanone isomerase 3 (225 aa).

The substrate site is built by T51, N116, and T193.

It belongs to the chalcone isomerase family.

The catalysed reaction is a chalcone = a flavanone.. Its pathway is secondary metabolite biosynthesis; flavonoid biosynthesis. Functionally, catalyzes the intramolecular cyclization of bicyclic chalcones into tricyclic (S)-flavanones. Responsible for the isomerization of 4,2',4',6'-tetrahydroxychalcone (also termed chalcone) into naringenin. The sequence is that of Chalcone--flavanone isomerase 3 (CHI3) from Lotus japonicus (Lotus corniculatus var. japonicus).